A 557-amino-acid chain; its full sequence is MFS-type transporter clz4 (557 aa).

The next 14 helical transmembrane spans lie at 22-42, 59-79, 89-109, 120-140, 150-170, 179-199, 217-237, 245-265, 269-289, 319-339, 346-366, 379-399, 419-439, and 479-499; these read LIIV…DHNG, SITW…VLYG, ALFV…GFAT, LTGA…TDVV, AVVA…AAGV, GLFW…GYIL, WLGS…VSGP, SLLV…FLFI, LATL…SALL, VISG…SMIA, SGQY…GSLL, VIIV…PMVI, FFRF…LQST, and HVYI…FVWK. Basic and acidic residues predominate over residues 505–523; that stretch reads SRPTENNDDIEHAPARGIE. The disordered stretch occupies residues 505–557; it reads SRPTENNDDIEHAPARGIEREDEQSSLIYDREPSAVSYGTVEAGEPNRLRRGG.

The protein belongs to the major facilitator superfamily. TCR/Tet family.

It localises to the membrane. In terms of biological role, MFS-type transporter; part of the gene cluster that mediates the biosynthesis of squalestatin S1 (SQS1, also known as zaragozic acid A), a heavily oxidized fungal polyketide that offers potent cholesterol lowering activity by targeting squalene synthase (SS). In Cochliobolus lunatus (Filamentous fungus), this protein is MFS-type transporter clz4.